The sequence spans 612 residues: Sulfite reductase [NADPH] hemoprotein beta-component (612 aa).

The tract at residues 1 to 26 (MDDHKPIETPDGPAVDTPGIGARRYE) is disordered. Cysteine 469, cysteine 475, cysteine 514, and cysteine 518 together coordinate [4Fe-4S] cluster. Cysteine 518 lines the siroheme pocket.

The protein belongs to the nitrite and sulfite reductase 4Fe-4S domain family. Alpha(8)-beta(8). The alpha component is a flavoprotein, the beta component is a hemoprotein. The cofactor is siroheme. It depends on [4Fe-4S] cluster as a cofactor.

The enzyme catalyses hydrogen sulfide + 3 NADP(+) + 3 H2O = sulfite + 3 NADPH + 4 H(+). Its pathway is sulfur metabolism; hydrogen sulfide biosynthesis; hydrogen sulfide from sulfite (NADPH route): step 1/1. Functionally, component of the sulfite reductase complex that catalyzes the 6-electron reduction of sulfite to sulfide. This is one of several activities required for the biosynthesis of L-cysteine from sulfate. The chain is Sulfite reductase [NADPH] hemoprotein beta-component from Methylorubrum extorquens (strain PA1) (Methylobacterium extorquens).